The sequence spans 391 residues: F-box protein At2g34280 (391 aa).

Positions 1–43 (MDLLPYDVVEHILERLDVKSLLNCKSVSKQWRSTIRCRAFQER) constitute an F-box domain.

This chain is F-box protein At2g34280, found in Arabidopsis thaliana (Mouse-ear cress).